The sequence spans 237 residues: Golgi to ER traffic protein 1 (237 aa).

The Lumenal portion of the chain corresponds to Met1–Gly4. Residues Gly5–Thr24 traverse the membrane as a helical segment. Residues Ser25–Lys110 are Cytoplasmic-facing. The stretch at Glu40–Asn99 forms a coiled coil. The helical transmembrane segment at Leu111–Tyr131 threads the bilayer. Residues His132 to Gly176 are Lumenal-facing. Residues Val177–Leu193 form a helical membrane-spanning segment. The Cytoplasmic portion of the chain corresponds to Glu194–Asp237. Residues Pro205 to Asp237 form a disordered region. The span at Thr217–Asp237 shows a compositional bias: basic and acidic residues.

It belongs to the WRB/GET1 family. As to quaternary structure, component of the Golgi to ER traffic (GET) complex, which is composed of GET1, GET2 and GET3. Within the complex, GET1 and GET2 form a heterotetramer which is stabilized by phosphatidylinositol binding and which binds to the GET3 homodimer.

The protein localises to the endoplasmic reticulum membrane. Its subcellular location is the golgi apparatus membrane. Its function is as follows. Required for the post-translational delivery of tail-anchored (TA) proteins to the endoplasmic reticulum. Together with GET2, acts as a membrane receptor for soluble GET3, which recognizes and selectively binds the transmembrane domain of TA proteins in the cytosol. The GET complex cooperates with the HDEL receptor ERD2 to mediate the ATP-dependent retrieval of resident ER proteins that contain a C-terminal H-D-E-L retention signal from the Golgi to the ER. In Zygosaccharomyces rouxii (strain ATCC 2623 / CBS 732 / NBRC 1130 / NCYC 568 / NRRL Y-229), this protein is Golgi to ER traffic protein 1.